An 89-amino-acid chain; its full sequence is Cell division protein FtsL (89 aa).

At 1–22 (MIDRKHYHLVGSIGKDILNNGK) the chain is on the cytoplasmic side. Residues 23–40 (LPALLLIAVLASSSLVVI) traverse the membrane as a helical segment. Residues 41–89 (TTYQTRRLTVEREQLLLEQNILDIEWRNLILEDNVISDQSRFEFVATEQ) are Periplasmic-facing.

It belongs to the FtsL family. As to quaternary structure, part of a complex composed of FtsB, FtsL and FtsQ.

Its subcellular location is the cell inner membrane. Functionally, essential cell division protein. May link together the upstream cell division proteins, which are predominantly cytoplasmic, with the downstream cell division proteins, which are predominantly periplasmic. The chain is Cell division protein FtsL from Moranella endobia (strain PCIT).